Reading from the N-terminus, the 218-residue chain is Glutathione S-transferase Mu 6 (218 aa).

Positions 1 to 88 (MPVTLGYWDI…YLGRKHNLCG (88 aa)) constitute a GST N-terminal domain. Residues 7–8 (YW), 46–50 (WLNDK), 59–60 (NL), and 72–73 (QS) contribute to the glutathione site. Positions 90-208 (TEEERIRVDI…KTSRFLPSPV (119 aa)) constitute a GST C-terminal domain. Tyr-116 is a binding site for substrate.

Belongs to the GST superfamily. Mu family. Homodimer. In terms of tissue distribution, expressed in liver, stomach and small intestine. Not expressed in spleen, kidney, colon, heart, muscle, brain or lung.

It localises to the cytoplasm. The enzyme catalyses RX + glutathione = an S-substituted glutathione + a halide anion + H(+). In terms of biological role, conjugation of reduced glutathione to a wide number of exogenous and endogenous hydrophobic electrophiles. The polypeptide is Glutathione S-transferase Mu 6 (Gstm6) (Mus musculus (Mouse)).